A 486-amino-acid chain; its full sequence is Ribulose bisphosphate carboxylase large chain (486 aa).

Positions 125 and 175 each coordinate substrate. Catalysis depends on K177, which acts as the Proton acceptor. Substrate is bound at residue K179. Residues K203, D205, and E206 each contribute to the Mg(2+) site. K203 is modified (N6-carboxylysine). H295 (proton acceptor) is an active-site residue. Substrate-binding residues include R296, H328, and S380.

Belongs to the RuBisCO large chain family. Type I subfamily. As to quaternary structure, heterohexadecamer of 8 large chains and 8 small chains. Mg(2+) serves as cofactor.

It catalyses the reaction 2 (2R)-3-phosphoglycerate + 2 H(+) = D-ribulose 1,5-bisphosphate + CO2 + H2O. The catalysed reaction is D-ribulose 1,5-bisphosphate + O2 = 2-phosphoglycolate + (2R)-3-phosphoglycerate + 2 H(+). RuBisCO catalyzes two reactions: the carboxylation of D-ribulose 1,5-bisphosphate, the primary event in carbon dioxide fixation, as well as the oxidative fragmentation of the pentose substrate. Both reactions occur simultaneously and in competition at the same active site. This chain is Ribulose bisphosphate carboxylase large chain, found in Bradyrhizobium diazoefficiens (strain JCM 10833 / BCRC 13528 / IAM 13628 / NBRC 14792 / USDA 110).